The chain runs to 143 residues: Transcriptional regulator MraZ (143 aa).

2 SpoVT-AbrB domains span residues 5-47 (QYEH…SLDE) and 76-119 (AVEC…SKEV).

Belongs to the MraZ family. As to quaternary structure, forms oligomers.

It is found in the cytoplasm. Its subcellular location is the nucleoid. The chain is Transcriptional regulator MraZ from Caldanaerobacter subterraneus subsp. tengcongensis (strain DSM 15242 / JCM 11007 / NBRC 100824 / MB4) (Thermoanaerobacter tengcongensis).